Reading from the N-terminus, the 72-residue chain is uncharacterized protein (72 aa).

This is an uncharacterized protein from Saccharomyces cerevisiae (strain ATCC 204508 / S288c) (Baker's yeast).